Here is a 719-residue protein sequence, read N- to C-terminus: Cyclin-dependent kinase 11.1 (719 aa).

3 stretches are compositionally biased toward basic and acidic residues: residues 1 to 20 (MSDH…ESHK), 38 to 48 (KGLESKMRESI), and 78 to 129 (KAKE…DQKV). Disordered regions lie at residues 1–215 (MSDH…KDDD) and 231–315 (EEKE…EMTE). Over residues 130-140 (HEHRHHHHHRK) the composition is skewed to basic residues. Basic and acidic residues predominate over residues 141–163 (HETDGHRTNRSNRDRSSERDSEK). A compositionally biased stretch (basic residues) spans 164 to 174 (HKRHIDRHKKS). Composition is skewed to basic and acidic residues over residues 191–215 (HTDV…KDDD) and 264–274 (DDTKPKSPGKA). Positions 275–285 (EDDDDVIEVLD) are enriched in acidic residues. One can recognise a Protein kinase domain in the interval 356-647 (YECVNRVDEG…ATQALDHEWF (292 aa)). Residues 362–370 (VDEGTFGVV) and lysine 385 each bind ATP. Aspartate 484 serves as the catalytic Proton acceptor. Residues 657–689 (EEFPTFPAKSEQNKAPPPAKQKQQENRISHVDP) are disordered. Basic and acidic residues predominate over residues 678–689 (KQQENRISHVDP).

The protein belongs to the protein kinase superfamily. CMGC Ser/Thr protein kinase family. CDC2/CDKX subfamily. In terms of tissue distribution, broadly expressed in somatic and germ line cells (at protein level). Not expressed in sperm (at protein level).

The protein resides in the nucleus. It catalyses the reaction L-seryl-[protein] + ATP = O-phospho-L-seryl-[protein] + ADP + H(+). The enzyme catalyses L-threonyl-[protein] + ATP = O-phospho-L-threonyl-[protein] + ADP + H(+). Probable cyclin-dependent kinase whose activity is most likely regulated by the cyclin cyl-1/Cylin-L. Important for normal oocyte and sperm development; probably required during multiple stages of gametogenesis. Plays a role in the activation of RAS-ERK signaling in the germ line. Also acts partially redundantly with cdk-11.2 to ensure embryonic viability. In Caenorhabditis elegans, this protein is Cyclin-dependent kinase 11.1.